A 174-amino-acid chain; its full sequence is RNA pyrophosphohydrolase (174 aa).

The Nudix hydrolase domain occupies 6–150 (GFRPNVGIVI…KREVYRRVMK (145 aa)). The short motif at 38–59 (GGVDDGETPEQAMFRELYEEIG) is the Nudix box element.

The protein belongs to the Nudix hydrolase family. RppH subfamily. It depends on a divalent metal cation as a cofactor.

In terms of biological role, accelerates the degradation of transcripts by removing pyrophosphate from the 5'-end of triphosphorylated RNA, leading to a more labile monophosphorylated state that can stimulate subsequent ribonuclease cleavage. In Tolumonas auensis (strain DSM 9187 / NBRC 110442 / TA 4), this protein is RNA pyrophosphohydrolase.